We begin with the raw amino-acid sequence, 360 residues long: Protein Wnt-2 (360 aa).

Residues 1-25 (MNAPLGGIWLWLPLLLTWLSPEVSS) form the signal peptide. Cystine bridges form between Cys76/Cys87, Cys127/Cys135, Cys137/Cys157, Cys206/Cys220, Cys208/Cys215, Cys278/Cys309, Cys294/Cys304, Cys308/Cys348, Cys324/Cys339, Cys326/Cys336, and Cys331/Cys332. A lipid anchor (O-palmitoleoyl serine; by PORCN) is attached at Ser212. A glycan (N-linked (GlcNAc...) asparagine) is linked at Asn295.

It belongs to the Wnt family. Post-translationally, palmitoleoylation is required for efficient binding to frizzled receptors. Depalmitoleoylation leads to Wnt signaling pathway inhibition.

It localises to the secreted. It is found in the extracellular space. The protein resides in the extracellular matrix. Functionally, ligand for members of the frizzled family of seven transmembrane receptors. Probable developmental protein. May be a signaling molecule which affects the development of discrete regions of tissues. Is likely to signal over only few cell diameters. The protein is Protein Wnt-2 (WNT2) of Carollia perspicillata (Seba's short-tailed bat).